Reading from the N-terminus, the 637-residue chain is 3D-(3,5/4)-trihydroxycyclohexane-1,2-dione hydrolase (637 aa).

Position 66 (Glu-66) interacts with thiamine diphosphate. The segment at 442 to 522 (SLPGDLQRLW…INVLLFDNSG (81 aa)) is thiamine pyrophosphate binding. Positions 493 and 520 each coordinate Mg(2+).

This sequence belongs to the TPP enzyme family. Requires Mg(2+) as cofactor. The cofactor is thiamine diphosphate.

The enzyme catalyses 3D-3,5/4-trihydroxycyclohexane-1,2-dione + H2O = 5-deoxy-D-glucuronate + H(+). Its pathway is polyol metabolism; myo-inositol degradation into acetyl-CoA; acetyl-CoA from myo-inositol: step 3/7. Its function is as follows. Involved in the cleavage of the C1-C2 bond of 3D-(3,5/4)-trihydroxycyclohexane-1,2-dione (THcHDO) to yield 5-deoxy-glucuronate (5DG). This Bacillus velezensis (strain DSM 23117 / BGSC 10A6 / LMG 26770 / FZB42) (Bacillus amyloliquefaciens subsp. plantarum) protein is 3D-(3,5/4)-trihydroxycyclohexane-1,2-dione hydrolase.